The sequence spans 745 residues: Junction plakoglobin (745 aa).

Met-1 bears the N-acetylmethionine mark. Thr-14 carries an O-linked (GlcNAc) threonine glycan. Phosphoserine is present on residues Ser-99 and Ser-125. 12 ARM repeats span residues Asn-132 to Lys-171, Lys-172 to His-215, Arg-216 to Leu-255, Glu-258 to Tyr-297, Gly-298 to Cys-341, Pro-342 to Asp-381, Ala-383 to Cys-420, Ser-423 to Ser-464, Glu-470 to Leu-510, Pro-512 to Thr-551, Pro-574 to Gln-613, and Lys-615 to Arg-661. An interaction with DSC1 and DSG1 region spans residues Asn-132–Tyr-297. The residue at position 182 (Ser-182) is a Phosphoserine. The segment at Pro-574–Arg-661 is interaction with DSC1. Phosphoserine is present on residues Ser-665 and Ser-730.

It belongs to the beta-catenin family. In terms of assembly, homodimer. Component of an E-cadherin/catenin adhesion complex composed of at least E-cadherin/CDH1 and gamma-catenin/JUP, and possibly alpha-catenin/CTNNA1; the complex is located to adherens junctions. The stable association of CTNNA1 is controversial as CTNNA1 was shown not to bind to F-actin when assembled in the complex. Interacts with MUC1. Interacts with CAV1. Interacts with PTPRJ. Interacts with DSG1. Interacts with DSC1 and DSC2. Interacts with PKP2. Interacts with PKP3 (via N-terminus); the interaction is required for PKP3 localization to desmosome cell-cell junctions. Interacts with DSG4. May be phosphorylated by FER.

It localises to the cell junction. Its subcellular location is the adherens junction. The protein localises to the desmosome. The protein resides in the cytoplasm. It is found in the cytoskeleton. It localises to the cell membrane. Its subcellular location is the nucleus. Functionally, common junctional plaque protein. The membrane-associated plaques are architectural elements in an important strategic position to influence the arrangement and function of both the cytoskeleton and the cells within the tissue. The presence of plakoglobin in both the desmosomes and in the intermediate junctions suggests that it plays a central role in the structure and function of submembranous plaques. Acts as a substrate for VE-PTP and is required by it to stimulate VE-cadherin function in endothelial cells. Can replace beta-catenin in E-cadherin/catenin adhesion complexes which are proposed to couple cadherins to the actin cytoskeleton. This Bos taurus (Bovine) protein is Junction plakoglobin.